Reading from the N-terminus, the 295-residue chain is Bifunctional protein FolD (295 aa).

Residues 166-168 (GRS), S195, and I236 each bind NADP(+).

This sequence belongs to the tetrahydrofolate dehydrogenase/cyclohydrolase family. In terms of assembly, homodimer.

The catalysed reaction is (6R)-5,10-methylene-5,6,7,8-tetrahydrofolate + NADP(+) = (6R)-5,10-methenyltetrahydrofolate + NADPH. It carries out the reaction (6R)-5,10-methenyltetrahydrofolate + H2O = (6R)-10-formyltetrahydrofolate + H(+). Its pathway is one-carbon metabolism; tetrahydrofolate interconversion. Its function is as follows. Catalyzes the oxidation of 5,10-methylenetetrahydrofolate to 5,10-methenyltetrahydrofolate and then the hydrolysis of 5,10-methenyltetrahydrofolate to 10-formyltetrahydrofolate. The sequence is that of Bifunctional protein FolD from Chlorobium phaeobacteroides (strain DSM 266 / SMG 266 / 2430).